The sequence spans 1592 residues: Laminin subunit gamma-1 (1592 aa).

An N-terminal signal peptide occupies residues 1–19 (MRAPVLAVLAVLLLGTVRA). The Laminin N-terminal domain occupies 29 to 268 (SPQRCMPEFV…AISDFAVGGR (240 aa)). N-linked (GlcNAc...) asparagine glycans are attached at residues N43 and N117. 16 disulfides stabilise this stretch: C269–C278, C271–C288, C290–C299, C302–C322, C325–C334, C327–C350, C353–C362, C365–C378, C381–C393, C383–C399, C401–C410, C413–C425, C428–C439, C430–C446, C448–C457, and C460–C475. Laminin EGF-like domains lie at 269-324 (CKCN…ECLP), 325-380 (CNCN…PCHA), 381-427 (CQCN…GCRP), and 428-477 (CACN…GCTP). Positions 504-672 (SGVEGWTAQQ…AGPSAPWVEI (169 aa)) constitute a Laminin IV type A domain. 2 N-linked (GlcNAc...) asparagine glycosylation sites follow: N559 and N633. 24 cysteine pairs are disulfide-bonded: C707–C716, C709–C723, C725–C734, C737–C753, C756–C764, C758–C775, C778–C787, C790–C808, C811–C825, C813–C832, C835–C844, C847–C864, C867–C881, C869–C888, C890–C899, C902–C915, C918–C930, C920–C937, C939–C948, C951–C963, C966–C978, C968–C984, C986–C995, and C998–C1011. Laminin EGF-like domains follow at residues 707 to 755 (CTCN…DCQP), 756 to 810 (CPCP…PCRI), 811 to 866 (CECS…KCRA), 867 to 917 (CSCN…GCER), 918 to 965 (CDCH…GCKP), and 966 to 1013 (CDCD…GCQE). Residues N1005, N1041, N1048, N1090, N1144, N1158, N1188, N1206, N1253, N1363, and N1386 are each glycosylated (N-linked (GlcNAc...) asparagine). A domain II and I region spans residues 1013-1592 (ECPACYRLVK…CYNTPIIEKP (580 aa)). Positions 1018 to 1477 (YRLVKDKVNE…DEKMAEMASN (460 aa)) form a coiled coil. A compositionally biased stretch (basic and acidic residues) spans 1456 to 1472 (NQLKKKQAEAESDEKMA). A disordered region spans residues 1456–1489 (NQLKKKQAEAESDEKMAEMASNATKDAESNANNS). A compositionally biased stretch (polar residues) spans 1476-1489 (SNATKDAESNANNS). N-linked (GlcNAc...) asparagine glycosylation is found at N1477 and N1487. A coiled-coil region spans residues 1515-1579 (VGQLTVLEKT…ANLEDIKNTL (65 aa)).

In terms of assembly, laminin is a complex glycoprotein, consisting of three different polypeptide chains (alpha, beta, gamma), which are bound to each other by disulfide bonds into a cross-shaped molecule comprising one long and three short arms with globules at each end.

Its subcellular location is the secreted. The protein resides in the extracellular space. It localises to the extracellular matrix. The protein localises to the basement membrane. Functionally, binding to cells via a high affinity receptor, laminin is thought to mediate the attachment, migration and organization of cells into tissues during embryonic development by interacting with other extracellular matrix components. The sequence is that of Laminin subunit gamma-1 (lamc1) from Xenopus tropicalis (Western clawed frog).